A 160-amino-acid polypeptide reads, in one-letter code: ATP synthase subunit b (160 aa).

A helical membrane pass occupies residues 12–32 (ISFVLFVWFCMKYVWYPFISI).

It belongs to the ATPase B chain family. In terms of assembly, F-type ATPases have 2 components, F(1) - the catalytic core - and F(0) - the membrane proton channel. F(1) has five subunits: alpha(3), beta(3), gamma(1), delta(1), epsilon(1). F(0) has three main subunits: a(1), b(2) and c(10-14). The alpha and beta chains form an alternating ring which encloses part of the gamma chain. F(1) is attached to F(0) by a central stalk formed by the gamma and epsilon chains, while a peripheral stalk is formed by the delta and b chains.

The protein resides in the cell inner membrane. Its function is as follows. F(1)F(0) ATP synthase produces ATP from ADP in the presence of a proton or sodium gradient. F-type ATPases consist of two structural domains, F(1) containing the extramembraneous catalytic core and F(0) containing the membrane proton channel, linked together by a central stalk and a peripheral stalk. During catalysis, ATP synthesis in the catalytic domain of F(1) is coupled via a rotary mechanism of the central stalk subunits to proton translocation. Functionally, component of the F(0) channel, it forms part of the peripheral stalk, linking F(1) to F(0). This chain is ATP synthase subunit b, found in Blochmanniella pennsylvanica (strain BPEN).